The following is a 255-amino-acid chain: Tachylectin-2 (255 aa).

An N-terminal signal peptide occupies residues 1–19 (MKFLLVVLGFIGFLKDGIT). WD repeat units lie at residues 20 to 67 (VGGE…FLFL), 68 to 114 (SPGG…FLFF), 115 to 161 (DPNG…FLFF), 162 to 208 (HPNG…FLFF), and 209 to 255 (SSVG…FLFF).

As to quaternary structure, monomer.

The protein resides in the secreted. The protein localises to the cytoplasmic granule. Lectin that binds specifically to N-acetylglucosamine and N-acetylgalactosamine. Is part of the innate immunity host defense system of the horseshoe crab. In Tachypleus tridentatus (Japanese horseshoe crab), this protein is Tachylectin-2.